The primary structure comprises 238 residues: Probable transcriptional regulatory protein YeeN (238 aa).

This sequence belongs to the TACO1 family. YeeN subfamily.

The protein resides in the cytoplasm. This is Probable transcriptional regulatory protein YeeN from Shigella sonnei (strain Ss046).